A 291-amino-acid polypeptide reads, in one-letter code: Protein SpdB (291 aa).

The next 3 helical transmembrane spans lie at 24–44 (VVVI…LVVG), 71–91 (ITGV…AHAL), and 99–119 (WLAV…HGLW).

The protein localises to the cell membrane. Its function is as follows. Involved in plasmid transfer. This Streptomyces lividans protein is Protein SpdB (spdB).